The chain runs to 332 residues: 2-oxoglutarate-dependent dioxygenase ecdK (332 aa).

In terms of domain architecture, Fe2OG dioxygenase spans 178 to 294 (HASELRLNHY…RRSVAFFLKP (117 aa)). Residues H206, D208, and H266 each contribute to the Fe cation site. R285 provides a ligand contact to 2-oxoglutarate.

Belongs to the iron/ascorbate-dependent oxidoreductase family. Fe(2+) serves as cofactor.

It functions in the pathway antifungal biosynthesis. In terms of biological role, 2-oxoglutarate-dependent dioxygenase; part of the gene cluster that mediates the biosynthesis of echinocandin B, a fungal lipidated cyclic hexapeptide that acts as an antifungal agent. Linoleoyl-AMP, produced by the fatty-acyl-AMP ligase ecdI, is transferred to the initiation carrier domain (T0) of ecdA. The linoleoyl-S-phosphopantetheinyl-T0 is sequentially extended with L-ornithine, L-threonine, L-proline, L-homotyrosine, L-threonine, and 4R-methyl-L-proline to form the linear hexapeptide. Thereafter, the terminal condensation (C7) performs macrocyclization of the NRPS product and the cyclic scaffold is released from ecdA. All six of the amino acid residues are hydroxylated, including 4R,5R-dihydroxy-L-ornithine, 4R-hydroxyl-L-proline, 3S,4S-dihydroxy-L-homotyrosine, and 3S-hydroxyl-4S-methyl-L-prolin. In the pathway, all the hydroxylation reactions are proposed to occur following completion of the cyclic peptide, so the unhydroxylated precursor produced by ecdA will undergo six rounds of hydroxylation. Five hydroxylase genes (ecdG, ecdH, ecdK, htyE and htyF) are embedded within the echinocandin B (ecd) and L-homotyrosine (hty) clusters. This is 2-oxoglutarate-dependent dioxygenase ecdK from Aspergillus rugulosus (Emericella rugulosa).